We begin with the raw amino-acid sequence, 1543 residues long: ABC multidrug transporter AFR1 (1543 aa).

Residues 1 to 85 form a disordered region; that stretch reads MSAAGVPAEL…DGKQKRLPAD (85 aa). Positions 18–41 are enriched in polar residues; it reads TATTQNPSGLANSQVTSGPVSSAT. Basic and acidic residues predominate over residues 62-83; it reads AVEAEKAEAIDAAGDGKQKRLP. A glycan (N-linked (GlcNAc...) asparagine) is linked at N117. The interval 119–157 is disordered; the sequence is SQRSQHELHRPTTRHSVRSSFSRKDRVVSRLTQDDAEKA. The segment covering 140–157 has biased composition (basic and acidic residues); that stretch reads SRKDRVVSRLTQDDAEKA. 2 N-linked (GlcNAc...) asparagine glycosylation sites follow: N208 and N398. An ABC transporter 1 domain is found at 222–474; it reads IKVLGIFGFN…MIGLGYRDLP (253 aa). Transmembrane regions (helical) follow at residues 585–605, 619–639, 670–690, 695–715, and 727–747; these read FGIS…GSVY, GGLL…ELPS, VPYN…MGGL, GAFF…SAFF, and VAAR…GYMI. N-linked (GlcNAc...) asparagine glycosylation is present at N823. A helical membrane pass occupies residues 845–865; it reads FGILLGFFTFFMFLQMLFIEV. The region spanning 918-1160 is the ABC transporter 2 domain; the sequence is FTWEGLSYTV…VLIDYLERNG (243 aa). 954–961 contributes to the ATP binding site; that stretch reads GASGAGKT. N-linked (GlcNAc...) asparagine glycosylation occurs at N1223. The next 6 membrane-spanning stretches (helical) occupy residues 1254-1274, 1285-1305, 1336-1356, 1366-1386, 1391-1411, and 1517-1537; these read WTRL…FLQL, VFAI…IEPQ, MPYS…GVGF, FFLM…AVAA, ILIA…FCGV, and FGIF…AARF.

The protein belongs to the ABC transporter superfamily. ABCG family. PDR (TC 3.A.1.205) subfamily.

It is found in the cell membrane. The enzyme catalyses itraconazole(in) + ATP + H2O = itraconazole(out) + ADP + phosphate + H(+). The catalysed reaction is voriconazole(in) + ATP + H2O = voriconazole(out) + ADP + phosphate + H(+). It catalyses the reaction fluconazole(in) + ATP + H2O = fluconazole(out) + ADP + phosphate + H(+). Functionally, major pleiotropic ABC efflux transporter that confers resistance to structurally and functionally unrelated compounds including azoles such as fluconazole (FLC), itraconazole (ITC), posaconazole (POS), and voriconazole (VRC). Is also able to efflux the eukaryote protein synthesis inhibitor cycloheximide (CHX). This chain is ABC multidrug transporter AFR1, found in Cryptococcus neoformans var. grubii serotype A (strain H99 / ATCC 208821 / CBS 10515 / FGSC 9487) (Filobasidiella neoformans var. grubii).